The chain runs to 212 residues: Peptide methionine sulfoxide reductase MsrA (212 aa).

Cysteine 52 is a catalytic residue.

The protein belongs to the MsrA Met sulfoxide reductase family.

The enzyme catalyses L-methionyl-[protein] + [thioredoxin]-disulfide + H2O = L-methionyl-(S)-S-oxide-[protein] + [thioredoxin]-dithiol. The catalysed reaction is [thioredoxin]-disulfide + L-methionine + H2O = L-methionine (S)-S-oxide + [thioredoxin]-dithiol. In terms of biological role, has an important function as a repair enzyme for proteins that have been inactivated by oxidation. Catalyzes the reversible oxidation-reduction of methionine sulfoxide in proteins to methionine. The polypeptide is Peptide methionine sulfoxide reductase MsrA (Escherichia fergusonii (strain ATCC 35469 / DSM 13698 / CCUG 18766 / IAM 14443 / JCM 21226 / LMG 7866 / NBRC 102419 / NCTC 12128 / CDC 0568-73)).